We begin with the raw amino-acid sequence, 483 residues long: Regulatory protein ViaA (483 aa).

This sequence belongs to the ViaA family. As to quaternary structure, homodimer. Interacts with RavA.

Its subcellular location is the cytoplasm. Functionally, component of the RavA-ViaA chaperone complex, which may act on the membrane to optimize the function of some of the respiratory chains. ViaA stimulates the ATPase activity of RavA. In Escherichia coli O9:H4 (strain HS), this protein is Regulatory protein ViaA.